We begin with the raw amino-acid sequence, 635 residues long: MATAEIDDLIEKLKTTSVSPANTTNLLCEISATKDPKLFDKHELAECFLGLTKCDDTNVRKEAAKCIAEITKSEVQRKKFTKRNIIAAFLECLRQVPTSDGSMELPIQICRALGNICYLNDEARDLILELEGDAVLLRLLDITTIEDVANAAQFIKVRGGLLSNYLLGGEGLAKRAMELGVMKKLQGIIDIGASNVEQHEDLLLNTLPLLSILTENVSDLNFDSSLNIQLSRILAASTNPDLAEMCLELLHYQAESDEVKLILAKDGLCETIYNLLEKYKTLASTSEARALMKLACELIVLILTGDDSMHYLYTTPLLKNMVDWLDSTDIDLLTTGVLALGNFARTDSHCIYFVEQQTMNKLLEVLAKNNGVKDDVRLQHALLSALRNLVIPKPNKNAVIQAGLVQTILPMLEIHQPPVVFKLLGTLRMTVDGQEKLALELLKNKTLIEQLVHWSKSSDYAGVTGESLRLMAWLIKHAYLSKIAYALPRKGDAPAEQIADKIPLTQDYDRSSLSEFLANEGTVEAMVSMLTAQHLVMQNEALIALCILSVVYLSQPSEAAQAQLLQDELVKCEVGKKLAELISKSSDTMTKEIVENLQNCVNLLKSSEQLVAHLEQHNINELLKSIPILTEYCTL.

ARM repeat units lie at residues 72-118 (KSEV…NICY), 346-391 (TDSH…NLVI), 392-432 (PKPN…MTVD), and 510-550 (RSSL…ILSV).

As to quaternary structure, interacts with Miro.

It localises to the endoplasmic reticulum. The protein resides in the mitochondrion. It is found in the cytoplasm. Its subcellular location is the cytosol. Functionally, probably acts as a GEF (guanine nucleotide exchange factor) for the Rho family of small GTP-binding proteins (G proteins) that stimulates the dissociation of GDP to enable subsequent binding of GTP. May also chaperone the processing and/or trafficking of small GTPases independently of GEF activity. By interacting with Miro, promotes mitochondrial fission in response to high calcium concentrations. This Drosophila melanogaster (Fruit fly) protein is GTPase-GDP dissociation stimulator vimar.